We begin with the raw amino-acid sequence, 513 residues long: 5-aminolevulinate synthase, erythroid-specific, mitochondrial (513 aa).

A mitochondrion-targeting transit peptide spans Met-1–Arg-18. Arg-98 contacts succinyl-CoA. Residues Cys-190 and Phe-191 each coordinate pyridoxal 5'-phosphate. Residues Ser-212 and Lys-231 each contribute to the succinyl-CoA site. Pyridoxal 5'-phosphate-binding residues include Ser-264, His-292, and Thr-320. Lys-323 is an active-site residue. Lys-323 carries the N6-(pyridoxal phosphate)lysine modification. Thr-352 and Thr-353 together coordinate pyridoxal 5'-phosphate. Succinyl-CoA is bound at residue Thr-437.

This sequence belongs to the class-II pyridoxal-phosphate-dependent aminotransferase family. As to quaternary structure, homodimer. The cofactor is pyridoxal 5'-phosphate. Erythroid-specific.

The protein localises to the mitochondrion inner membrane. It carries out the reaction succinyl-CoA + glycine + H(+) = 5-aminolevulinate + CO2 + CoA. It participates in porphyrin-containing compound metabolism; protoporphyrin-IX biosynthesis; 5-aminolevulinate from glycine: step 1/1. Catalyzes the pyridoxal 5'-phosphate (PLP)-dependent condensation of succinyl-CoA and glycine to form aminolevulinic acid (ALA), with CoA and CO2 as by-products. Contributes significantly to heme formation during erythropoiesis. The polypeptide is 5-aminolevulinate synthase, erythroid-specific, mitochondrial (ALAS2) (Gallus gallus (Chicken)).